Consider the following 337-residue polypeptide: Outer membrane protein U (337 aa).

The signal sequence occupies residues 1 to 21; sequence MKKTLIALSVSAAAMATGVNA.

The protein belongs to the Gram-negative porin family. In terms of assembly, homotrimer.

The protein resides in the cell outer membrane. Forms pores that allow passive diffusion of small molecules across the outer membrane. This is Outer membrane protein U (ompU) from Vibrio parahaemolyticus serotype O3:K6 (strain RIMD 2210633).